The primary structure comprises 483 residues: Glutarate-semialdehyde dehydrogenase (483 aa).

Residues 156–157 (WN), 180–183 (KPAS), and 233–234 (GS) each bind NADP(+). Catalysis depends on E255, which acts as the Proton acceptor. L256 is an NADP(+) binding site. The Nucleophile role is filled by C289. An NADP(+)-binding site is contributed by E386.

It belongs to the aldehyde dehydrogenase family.

The enzyme catalyses 5-oxopentanoate + NADP(+) + H2O = glutarate + NADPH + 2 H(+). It functions in the pathway amino-acid degradation. Catalyzes the conversion of 5-oxopentanoate (glutarate semialdehyde) to glutarate. Involved in L-lysine degradation. This Pseudomonas aeruginosa (strain ATCC 15692 / DSM 22644 / CIP 104116 / JCM 14847 / LMG 12228 / 1C / PRS 101 / PAO1) protein is Glutarate-semialdehyde dehydrogenase.